The primary structure comprises 62 residues: Toxin Tb2 (62 aa).

An LCN-type CS-alpha/beta domain is found at 1-62 (KEGYAMDHEG…KVWDYATNKC (62 aa)). Intrachain disulfides connect C11/C62, C15/C38, C23/C43, and C27/C45. C62 carries the cysteine amide modification.

It belongs to the long (4 C-C) scorpion toxin superfamily. Sodium channel inhibitor family. Beta subfamily. As to expression, expressed by the venom gland.

The protein resides in the secreted. In terms of biological role, beta toxins bind voltage-independently at site-4 of sodium channels (Nav) and shift the voltage of activation toward more negative potentials thereby affecting sodium channel activation and promoting spontaneous and repetitive firing. This toxin is active on mammals. The polypeptide is Toxin Tb2 (Tityus bahiensis (Brazilian scorpion)).